A 211-amino-acid polypeptide reads, in one-letter code: SsrA-binding protein (211 aa).

A disordered region spans residues 168-211; that stretch reads KHRLRRPRAQRNTQRSVTPRRTRENKNVRGSKARSARRNVRREN. Residues 177–186 show a composition bias toward polar residues; that stretch reads QRNTQRSVTP. The segment covering 196-211 has biased composition (basic residues); that stretch reads RGSKARSARRNVRREN.

Belongs to the SmpB family.

Its subcellular location is the cytoplasm. In terms of biological role, required for rescue of stalled ribosomes mediated by trans-translation. Binds to transfer-messenger RNA (tmRNA), required for stable association of tmRNA with ribosomes. tmRNA and SmpB together mimic tRNA shape, replacing the anticodon stem-loop with SmpB. tmRNA is encoded by the ssrA gene; the 2 termini fold to resemble tRNA(Ala) and it encodes a 'tag peptide', a short internal open reading frame. During trans-translation Ala-aminoacylated tmRNA acts like a tRNA, entering the A-site of stalled ribosomes, displacing the stalled mRNA. The ribosome then switches to translate the ORF on the tmRNA; the nascent peptide is terminated with the 'tag peptide' encoded by the tmRNA and targeted for degradation. The ribosome is freed to recommence translation, which seems to be the essential function of trans-translation. The protein is SsrA-binding protein of Tropheryma whipplei (strain Twist) (Whipple's bacillus).